An 84-amino-acid chain; its full sequence is ATP synthase subunit c (84 aa).

2 helical membrane passes run 9-29 and 57-77; these read LGLA…GCGI and ILGL…NLII.

The protein belongs to the ATPase C chain family. In terms of assembly, F-type ATPases have 2 components, F(1) - the catalytic core - and F(0) - the membrane proton channel. F(1) has five subunits: alpha(3), beta(3), gamma(1), delta(1), epsilon(1). F(0) has three main subunits: a(1), b(2) and c(10-14). The alpha and beta chains form an alternating ring which encloses part of the gamma chain. F(1) is attached to F(0) by a central stalk formed by the gamma and epsilon chains, while a peripheral stalk is formed by the delta and b chains.

Its subcellular location is the cell membrane. Functionally, f(1)F(0) ATP synthase produces ATP from ADP in the presence of a proton or sodium gradient. F-type ATPases consist of two structural domains, F(1) containing the extramembraneous catalytic core and F(0) containing the membrane proton channel, linked together by a central stalk and a peripheral stalk. During catalysis, ATP synthesis in the catalytic domain of F(1) is coupled via a rotary mechanism of the central stalk subunits to proton translocation. Its function is as follows. Key component of the F(0) channel; it plays a direct role in translocation across the membrane. A homomeric c-ring of between 10-14 subunits forms the central stalk rotor element with the F(1) delta and epsilon subunits. The chain is ATP synthase subunit c from Lawsonia intracellularis (strain PHE/MN1-00).